Here is a 177-residue protein sequence, read N- to C-terminus: Nucleoside triphosphate/diphosphate phosphatase (177 aa).

Arginine 23 (proton donor) is an active-site residue. Asparagine 87, aspartate 103, aspartate 105, aspartate 107, aspartate 120, and glutamate 123 together coordinate Mg(2+).

It belongs to the Ntdp family. The cofactor is Mg(2+).

It catalyses the reaction a ribonucleoside 5'-triphosphate + H2O = a ribonucleoside 5'-diphosphate + phosphate + H(+). The enzyme catalyses a ribonucleoside 5'-diphosphate + H2O = a ribonucleoside 5'-phosphate + phosphate + H(+). Has nucleoside phosphatase activity towards nucleoside triphosphates and nucleoside diphosphates. In Streptococcus pneumoniae serotype 19F (strain G54), this protein is Nucleoside triphosphate/diphosphate phosphatase.